We begin with the raw amino-acid sequence, 576 residues long: Malonate--CoA ligase ACSF3, mitochondrial (576 aa).

The transit peptide at 1–83 directs the protein to the mitochondrion; it reads MLPHVVLTFR…RSLRLSQEIC (83 aa). ATP contacts are provided by residues 202 to 210, Asp457, Arg471, and Lys563; that span reads TSGTTGRPK.

This sequence belongs to the ATP-dependent AMP-binding enzyme family.

The protein localises to the mitochondrion. The catalysed reaction is tetracosanoate + ATP + CoA = tetracosanoyl-CoA + AMP + diphosphate. The enzyme catalyses malonate + ATP + CoA = malonyl-CoA + AMP + diphosphate. Functionally, catalyzes the initial reaction in intramitochondrial fatty acid synthesis, by activating malonate and methylmalonate, but not acetate, into their respective CoA thioester. May have some preference toward very-long-chain substrates. The sequence is that of Malonate--CoA ligase ACSF3, mitochondrial from Homo sapiens (Human).